The primary structure comprises 293 residues: Coatomer subunit epsilon-2 (293 aa).

It belongs to the COPE family. As to quaternary structure, oligomeric complex that consists of at least the alpha, beta, beta', gamma, delta, epsilon and zeta subunits.

The protein resides in the cytoplasm. It localises to the golgi apparatus membrane. It is found in the cytoplasmic vesicle. Its subcellular location is the COPI-coated vesicle membrane. The coatomer is a cytosolic protein complex that binds to dilysine motifs and reversibly associates with Golgi non-clathrin-coated vesicles, which further mediate biosynthetic protein transport from the ER, via the Golgi up to the trans Golgi network. The coatomer complex is required for budding from Golgi membranes, and is essential for the retrograde Golgi-to-ER transport of dilysine-tagged proteins. The chain is Coatomer subunit epsilon-2 from Arabidopsis thaliana (Mouse-ear cress).